Here is a 310-residue protein sequence, read N- to C-terminus: Olfactory receptor 5T7 (310 aa).

Topologically, residues 1 to 23 (MENITEVTEFILMGFTDNADLEI) are extracellular. Residue asparagine 3 is glycosylated (N-linked (GlcNAc...) asparagine). A helical transmembrane segment spans residues 24–44 (LSFFLFLAIYLFTLMGNLGLI). At 45 to 52 (TLVIGDSR) the chain is on the cytoplasmic side. A helical membrane pass occupies residues 53-73 (LHNPMYYFLSVLSSVDACYST). Residues 74–97 (VITPQMVVDFVSEKKVISFIGCAT) are Extracellular-facing. A disulfide bridge connects residues cysteine 95 and cysteine 187. A helical transmembrane segment spans residues 98-118 (QMFLAVTFGTTECFLLAAMAY). The Cytoplasmic segment spans residues 119–131 (DRYVAIHNPLMYV). Residues 132–152 (VSMSPRVYVPLIIASYAGGIL) traverse the membrane as a helical segment. The Extracellular portion of the chain corresponds to 153–194 (HAVIHTVATFRLSFCGSNKISHIFCDIPPLLAISCSDTHFNQ). A helical membrane pass occupies residues 195–215 (LLLFYCAGFIEVVTILIVLLS). Topologically, residues 216–235 (YGFILSVILKTRSTEGKRKV) are cytoplasmic. Residues 236–256 (FSTCGSHLMAVSTFHGTVLFM) form a helical membrane-spanning segment. Topologically, residues 257–269 (YVRPSDSYALEHD) are extracellular. The helical transmembrane segment at 270 to 290 (MMVSIFYSIVIPMLNPLIYSL) threads the bilayer. Residues 291–310 (RNKDVKEAIKKVFGKRILCG) lie on the Cytoplasmic side of the membrane.

This sequence belongs to the G-protein coupled receptor 1 family.

The protein localises to the cell membrane. Potential odorant receptor. The polypeptide is Olfactory receptor 5T7 (Mus musculus (Mouse)).